The chain runs to 1298 residues: DNA repair protein rad-50 (1298 aa).

ATP is bound by residues R13, N38, G39, G41, K42, T43, T44, I66, and Q158. T43 is a Mg(2+) binding site. Q158 is a binding site for Mg(2+). Coiled coils occupy residues A222–E291, E317–K598, and A622–S660. Positions A622–G719 constitute a Zinc-hook domain. Zn(2+) is bound by residues C666 and C669. Coiled coils occupy residues L691–G719 and K754–I1092.

It belongs to the SMC family. RAD50 subfamily. In terms of assembly, component of the MRN complex composed of two heterodimers rad-50 and mre-11 associated with a single nbs-1. The cofactor is Zn(2+).

The protein resides in the nucleus. The protein localises to the chromosome. The enzyme catalyses ATP + H2O = ADP + phosphate + H(+). In terms of biological role, component of the MRN complex, which plays a central role in double-strand break (DSB) repair, DNA recombination, maintenance of telomere integrity and meiosis. The MRN complex is involved in the repair of DNA double-strand breaks (DSBs) via homologous recombination (HR), an error-free mechanism which primarily occurs during S and G2 phases. The complex (1) mediates the end resection of damaged DNA, which generates proper single-stranded DNA, a key initial steps in HR, and is (2) required for the recruitment of other repair factors and efficient activation of ATM and ATR upon DNA damage. The MRN complex possesses single-strand endonuclease activity and double-strand-specific 3'-5' exonuclease activity, which are provided by mre-11, to initiate end resection, which is required for single-strand invasion and recombination. Within the complex, rad-50 is both required to bind DNA ends and hold them in close proximity and regulate the activity of mre-11. Rad-50 provides an ATP-dependent control of mre-11 by positioning DNA ends into the mre-11 active site: ATP-binding induces a large structural change from an open form with accessible mre-11 nuclease sites into a closed form. This is DNA repair protein rad-50 (rad-50) from Caenorhabditis elegans.